We begin with the raw amino-acid sequence, 672 residues long: DNA ligase (672 aa).

NAD(+)-binding positions include 34-38 (DAEYD), 83-84 (SL), and E117. Residue K119 is the N6-AMP-lysine intermediate of the active site. NAD(+) contacts are provided by R140, E177, K293, and K317. Zn(2+) contacts are provided by C411, C414, C429, and C434. One can recognise a BRCT domain in the interval 591–672 (RVGGRFTGKT…FLAMLGVCRT (82 aa)).

It belongs to the NAD-dependent DNA ligase family. LigA subfamily. Mg(2+) is required as a cofactor. It depends on Mn(2+) as a cofactor.

It catalyses the reaction NAD(+) + (deoxyribonucleotide)n-3'-hydroxyl + 5'-phospho-(deoxyribonucleotide)m = (deoxyribonucleotide)n+m + AMP + beta-nicotinamide D-nucleotide.. In terms of biological role, DNA ligase that catalyzes the formation of phosphodiester linkages between 5'-phosphoryl and 3'-hydroxyl groups in double-stranded DNA using NAD as a coenzyme and as the energy source for the reaction. It is essential for DNA replication and repair of damaged DNA. The chain is DNA ligase from Geotalea uraniireducens (strain Rf4) (Geobacter uraniireducens).